We begin with the raw amino-acid sequence, 394 residues long: GTPase Era, mitochondrial (394 aa).

Positions 32–280 (KCLQLAVIGA…RDHLMSISPQ (249 aa)) constitute an Era-type G domain. The segment at 40 to 47 (GAPNVGKS) is G1. 40–47 (GAPNVGKS) contacts GTP. The tract at residues 66–70 (DTTTR) is G2. Residues 87-90 (DSPG) are G3. GTP contacts are provided by residues 87 to 91 (DSPGA) and 160 to 163 (NKID). The tract at residues 160-163 (NKID) is G4. Residues 259 to 261 (VSS) form a G5 region.

This sequence belongs to the TRAFAC class TrmE-Era-EngA-EngB-Septin-like GTPase superfamily. Era GTPase family.

It is found in the mitochondrion matrix. It localises to the mitochondrion inner membrane. Probable GTPase that plays a role in the mitochondrial ribosomal small subunit assembly. Specifically binds the 12S mitochondrial rRNA (12S mt-rRNA) to a 33 nucleotide section delineating the 3' terminal stem-loop region. May act as a chaperone that protects the 12S mt-rRNA on the 28S mitoribosomal subunit during ribosomal small subunit assembly. May play a role in positively regulating mitochondrial function. Plays a role in fertility. The polypeptide is GTPase Era, mitochondrial (Caenorhabditis elegans).